Consider the following 232-residue polypeptide: MKIAILQFGGTNCDQDVLHVLKDVVGVDAETVWYKQEDLTGFDGVVVPGGFSYGDYLRAGAIAARTPIMNSVKKLAAEGKPVLGICNGFQILTEARVLEGALTTNEYPKFRCHWTNLRVETVDTPFTSKFRKGEVIRMPIAHMEGQFYAEEKTLAELDENEQVVFRYVDENGKVTDEANPNGSLENIAGIVNTSRNIFGLMPHPERASESILGSDDGLRVFESMVDYITENF.

Residues lysine 2 to phenylalanine 232 enclose the Glutamine amidotransferase type-1 domain. The active-site Nucleophile is the cysteine 86. Catalysis depends on residues histidine 203 and glutamate 205.

Part of the FGAM synthase complex composed of 1 PurL, 1 PurQ and 2 PurS subunits.

It is found in the cytoplasm. The enzyme catalyses N(2)-formyl-N(1)-(5-phospho-beta-D-ribosyl)glycinamide + L-glutamine + ATP + H2O = 2-formamido-N(1)-(5-O-phospho-beta-D-ribosyl)acetamidine + L-glutamate + ADP + phosphate + H(+). The catalysed reaction is L-glutamine + H2O = L-glutamate + NH4(+). Its pathway is purine metabolism; IMP biosynthesis via de novo pathway; 5-amino-1-(5-phospho-D-ribosyl)imidazole from N(2)-formyl-N(1)-(5-phospho-D-ribosyl)glycinamide: step 1/2. In terms of biological role, part of the phosphoribosylformylglycinamidine synthase complex involved in the purines biosynthetic pathway. Catalyzes the ATP-dependent conversion of formylglycinamide ribonucleotide (FGAR) and glutamine to yield formylglycinamidine ribonucleotide (FGAM) and glutamate. The FGAM synthase complex is composed of three subunits. PurQ produces an ammonia molecule by converting glutamine to glutamate. PurL transfers the ammonia molecule to FGAR to form FGAM in an ATP-dependent manner. PurS interacts with PurQ and PurL and is thought to assist in the transfer of the ammonia molecule from PurQ to PurL. The protein is Phosphoribosylformylglycinamidine synthase subunit PurQ of Methanosarcina barkeri (strain Fusaro / DSM 804).